Consider the following 338-residue polypeptide: Ketol-acid reductoisomerase (NADP(+)) (338 aa).

In terms of domain architecture, KARI N-terminal Rossmann spans 1 to 181; the sequence is MKVYYDKDCD…GGGRTGIIET (181 aa). NADP(+)-binding positions include 24 to 27, Arg-47, Ser-50, Thr-52, and 82 to 85; these read YGSQ and DEFQ. His-107 is a catalytic residue. Gly-133 provides a ligand contact to NADP(+). The KARI C-terminal knotted domain occupies 182 to 327; the sequence is TFKDETETDL…EQLRSMMPWI (146 aa). Mg(2+)-binding residues include Asp-190, Glu-194, Glu-226, and Glu-230. Substrate is bound at residue Ser-251.

It belongs to the ketol-acid reductoisomerase family. Mg(2+) serves as cofactor.

The catalysed reaction is (2R)-2,3-dihydroxy-3-methylbutanoate + NADP(+) = (2S)-2-acetolactate + NADPH + H(+). It catalyses the reaction (2R,3R)-2,3-dihydroxy-3-methylpentanoate + NADP(+) = (S)-2-ethyl-2-hydroxy-3-oxobutanoate + NADPH + H(+). Its pathway is amino-acid biosynthesis; L-isoleucine biosynthesis; L-isoleucine from 2-oxobutanoate: step 2/4. It participates in amino-acid biosynthesis; L-valine biosynthesis; L-valine from pyruvate: step 2/4. Involved in the biosynthesis of branched-chain amino acids (BCAA). Catalyzes an alkyl-migration followed by a ketol-acid reduction of (S)-2-acetolactate (S2AL) to yield (R)-2,3-dihydroxy-isovalerate. In the isomerase reaction, S2AL is rearranged via a Mg-dependent methyl migration to produce 3-hydroxy-3-methyl-2-ketobutyrate (HMKB). In the reductase reaction, this 2-ketoacid undergoes a metal-dependent reduction by NADPH to yield (R)-2,3-dihydroxy-isovalerate. This is Ketol-acid reductoisomerase (NADP(+)) from Pseudomonas fluorescens (strain SBW25).